Consider the following 300-residue polypeptide: Ribosomal RNA small subunit methyltransferase H (300 aa).

S-adenosyl-L-methionine is bound by residues 46-48, aspartate 65, phenylalanine 92, aspartate 107, and glutamine 114; that span reads GGH.

Belongs to the methyltransferase superfamily. RsmH family.

The protein localises to the cytoplasm. The enzyme catalyses cytidine(1402) in 16S rRNA + S-adenosyl-L-methionine = N(4)-methylcytidine(1402) in 16S rRNA + S-adenosyl-L-homocysteine + H(+). In terms of biological role, specifically methylates the N4 position of cytidine in position 1402 (C1402) of 16S rRNA. The protein is Ribosomal RNA small subunit methyltransferase H of Prochlorococcus marinus (strain MIT 9312).